Consider the following 271-residue polypeptide: GTP cyclohydrolase FolE2 (271 aa).

The protein belongs to the GTP cyclohydrolase IV family.

It carries out the reaction GTP + H2O = 7,8-dihydroneopterin 3'-triphosphate + formate + H(+). The protein operates within cofactor biosynthesis; 7,8-dihydroneopterin triphosphate biosynthesis; 7,8-dihydroneopterin triphosphate from GTP: step 1/1. In terms of biological role, converts GTP to 7,8-dihydroneopterin triphosphate. This is GTP cyclohydrolase FolE2 from Geotalea uraniireducens (strain Rf4) (Geobacter uraniireducens).